A 514-amino-acid chain; its full sequence is MDLSTSGSLPCHLPLSLLTNLQTPPIDTSFSSPPATSSSSLLSPSPSSAFRPVVPKSLMNPQPAMDTFYMSAIQSLVVSTTNDDQYSEHGALEGSKSLAKDENASTSAGTILCQVCSDKASGFHYGVFACEGCKGFFRRSIQQKITYRACTRAEDCLILRNNRNRCQCCRLKKCLAVGMSRDAVRFGRVPKREKARMFEEMQKTNVQSQRDQIAIQYENLTEVMHKINQAFGTLQATLEKCTGPIYTDRCPITSNFIVIPLKAAIDFANSIPAFLSITQTQRVHLLQNSVFDVMLLASASASTSQHFPPGGLTYDQSSANPIIPQAIQSISARIRQLPPQTVPILTAIAVCQADLLPESQQPMLLAERLWCVLGKLGGIQSLATAPSLLADVRTLRQWHSDRLRQMSQISQHFSQNLLIAPVAAAAPVLLPPAFLSPPASATSTSSSSVKSEFIERHPSIASLLERPRRISSSGAQEPLNLSLPHVRHQVKRDVDSDEQLEEMKVSPVPTTLSE.

The interval 28-48 (TSFSSPPATSSSSLLSPSPSS) is disordered. The nuclear receptor DNA-binding region spans 110 to 186 (TILCQVCSDK…VGMSRDAVRF (77 aa)). 2 consecutive NR C4-type zinc fingers follow at residues 113–133 (CQVCSDKASGFHYGVFACEGC) and 150–174 (CTRAEDCLILRNNRNRCQCCRLKKC). Residues 216–514 (QYENLTEVMH…VSPVPTTLSE (299 aa)) enclose the NR LBD domain. The tract at residues 465–514 (ERPRRISSSGAQEPLNLSLPHVRHQVKRDVDSDEQLEEMKVSPVPTTLSE) is disordered.

It belongs to the nuclear hormone receptor family.

It localises to the nucleus. In terms of biological role, orphan nuclear receptor. The chain is Nuclear hormone receptor family member nhr-85 (nhr-85) from Caenorhabditis elegans.